The primary structure comprises 229 residues: Orotate phosphoribosyltransferase (229 aa).

Residues R107, K108, K111, H113, and 133-141 (EDLTTAGGS) contribute to the 5-phospho-alpha-D-ribose 1-diphosphate site. Orotate is bound at residue T137.

Belongs to the purine/pyrimidine phosphoribosyltransferase family. PyrE subfamily. In terms of assembly, homodimer. Mg(2+) serves as cofactor.

The enzyme catalyses orotidine 5'-phosphate + diphosphate = orotate + 5-phospho-alpha-D-ribose 1-diphosphate. The protein operates within pyrimidine metabolism; UMP biosynthesis via de novo pathway; UMP from orotate: step 1/2. In terms of biological role, catalyzes the transfer of a ribosyl phosphate group from 5-phosphoribose 1-diphosphate to orotate, leading to the formation of orotidine monophosphate (OMP). This chain is Orotate phosphoribosyltransferase, found in Rhizobium johnstonii (strain DSM 114642 / LMG 32736 / 3841) (Rhizobium leguminosarum bv. viciae).